Reading from the N-terminus, the 496-residue chain is Cytochrome P450 71D180 (496 aa).

Residues Met1–Met21 traverse the membrane as a helical; Signal-anchor for type II membrane protein segment. A heme-binding site is contributed by Cys435.

This sequence belongs to the cytochrome P450 family. Requires heme as cofactor. As to expression, mostly expressed in flowers and, to a lower extent, in leaves, especially in glandular trichomes.

The protein resides in the membrane. It catalyses the reaction (4R)-limonene + reduced [NADPH--hemoprotein reductase] + O2 = (1R,5S)-carveol + oxidized [NADPH--hemoprotein reductase] + H2O + H(+). The enzyme catalyses (4S)-limonene + reduced [NADPH--hemoprotein reductase] + O2 = (1S,5R)-carveol + oxidized [NADPH--hemoprotein reductase] + H2O + H(+). The catalysed reaction is gamma-terpinene + 2 reduced [NADPH--hemoprotein reductase] + 2 O2 = carvacrol + 2 oxidized [NADPH--hemoprotein reductase] + 3 H2O + 2 H(+). It participates in secondary metabolite biosynthesis; terpenoid biosynthesis. Involved in the biosynthesis of phenolic monoterpenes natural products thymol and carvacrol which have a broad range of biological activities acting as antimicrobial compounds, insecticides, antioxidants and pharmaceutical agents. Catalyzes the C2-hydroxylation of gamma-terpinene to produce carvacrol. Mediates also the C6-hydroxylation of (4S)-limonene and (4R)-limonene to form carveol. In Thymus vulgaris (Thyme), this protein is Cytochrome P450 71D180.